Here is a 1247-residue protein sequence, read N- to C-terminus: E3 ubiquitin-protein ligase hecw-1 (1247 aa).

The WW 1 domain maps to 602-635 (TPPESHWKTYLDAKKRKFYVNHVTKETRWTKPDT). Positions 633–659 (PDTLNNNHIEPETPVHKRLSDRSASPR) are disordered. A compositionally biased stretch (basic and acidic residues) spans 641 to 653 (IEPETPVHKRLSD). Positions 745-777 (QPLPSGWECITMNNRTVFLNHANKETSFYDPRI) constitute a WW 2 domain. Residues 914-1247 (DPFVLKKSRL…IVNGMSYSIE (334 aa)) enclose the HECT domain. The active-site Glycyl thioester intermediate is the Cys1215.

In terms of tissue distribution, expressed in the nervous system throughout the body. In the anterior ganglion, expression is limited to the two lateral outer labial neurons OLLL and OLLR.

It localises to the cytoplasm. The enzyme catalyses S-ubiquitinyl-[E2 ubiquitin-conjugating enzyme]-L-cysteine + [acceptor protein]-L-lysine = [E2 ubiquitin-conjugating enzyme]-L-cysteine + N(6)-ubiquitinyl-[acceptor protein]-L-lysine.. The protein operates within protein modification; protein ubiquitination. In terms of biological role, E3 ubiquitin-protein ligase. Functions in the OLL neurons in the anterior ganglion to inhibit avoidance to microbial pathogens such as P.aeruginosa although worms do display avoidance behavior, vacating a P.aeruginosa lawn within 24 hours. Likely to act by inhibiting the neuropeptide receptor npr-1. This chain is E3 ubiquitin-protein ligase hecw-1, found in Caenorhabditis elegans.